Here is a 396-residue protein sequence, read N- to C-terminus: Phosphoglycerate kinase (396 aa).

Substrate is bound by residues 21 to 23 (DLN), arginine 36, 59 to 62 (HFGR), arginine 118, and arginine 151. ATP-binding positions include lysine 201, glutamate 323, and 353–356 (GGDT).

It belongs to the phosphoglycerate kinase family. Monomer.

It is found in the cytoplasm. It catalyses the reaction (2R)-3-phosphoglycerate + ATP = (2R)-3-phospho-glyceroyl phosphate + ADP. It functions in the pathway carbohydrate degradation; glycolysis; pyruvate from D-glyceraldehyde 3-phosphate: step 2/5. This Brucella melitensis biotype 1 (strain ATCC 23456 / CCUG 17765 / NCTC 10094 / 16M) protein is Phosphoglycerate kinase.